A 322-amino-acid polypeptide reads, in one-letter code: Ras-like protein 2 (322 aa).

GTP is bound by residues 20–25 (GVGKSA), 36–42 (VDEYDPT), 66–67 (AG), and 123–126 (NKSD). The Effector region motif lies at 39–47 (YDPTIEDSY). Lysine 131 is covalently cross-linked (Glycyl lysine isopeptide (Lys-Gly) (interchain with G-Cter in ubiquitin)). 153-155 (SAK) contributes to the GTP binding site. Positions 178–322 (YNKTLTENDN…SGSGGCCIIS (145 aa)) are disordered. A compositionally biased stretch (polar residues) spans 180–205 (KTLTENDNSKQTSQDTKGSGANSVPR). Residues serine 198, serine 202, serine 207, serine 214, serine 235, and serine 238 each carry the phosphoserine modification. Residues 215 to 252 (NAANGKNVNSSTTVVNARNASIESKTGLAGNQATNGKT) show a composition bias toward polar residues. Positions 261-284 (NSTGQAGQANAQSANTVNNRVNNN) are enriched in low complexity. Polar residues predominate over residues 285–294 (SKAGQVSNAK). Cysteine 318 is lipidated: S-palmitoyl cysteine. Cysteine methyl ester is present on cysteine 319. Cysteine 319 carries the S-farnesyl cysteine lipid modification. The propeptide at 320-322 (IIS) is removed in mature form.

The protein belongs to the small GTPase superfamily. Ras family. Farnesylated by RAM1-RAM2, which is required for targeting RAS2 to the cytoplasmic site of the endoplasmic reticulum, where proteolytic processing of the C-terminus by RCE1 and methylation of the resulting carboxyl group by STE14 occurs. In terms of processing, palmitoylated by the ERF2-SHR5 complex, which is required for proper plasma membrane localization of RAS2.

The protein resides in the cell membrane. The enzyme catalyses GTP + H2O = GDP + phosphate + H(+). Its activity is regulated as follows. Alternates between an inactive form bound to GDP and an active form bound to GTP. Activated by guanine nucleotide-exchange factor (GEF) CDC25 and inactivated by GTPase-activating proteins (GAPs) IRA1 and IRA2. Its function is as follows. The S.cerevisiae Ras proteins modulate the activity of the adenylate cyclase catalytic subunit and therefore affect the biosynthesis of cyclic-AMP. This is Ras-like protein 2 (RAS2) from Saccharomyces cerevisiae (strain ATCC 204508 / S288c) (Baker's yeast).